We begin with the raw amino-acid sequence, 359 residues long: Fructose-bisphosphate aldolase, cytoplasmic isozyme 2 (359 aa).

Substrate is bound by residues arginine 52 and lysine 143. The active-site Proton acceptor is the glutamate 184. Lysine 226 functions as the Schiff-base intermediate with dihydroxyacetone-P in the catalytic mechanism.

The protein belongs to the class I fructose-bisphosphate aldolase family.

The protein resides in the cytoplasm. The enzyme catalyses beta-D-fructose 1,6-bisphosphate = D-glyceraldehyde 3-phosphate + dihydroxyacetone phosphate. The protein operates within carbohydrate degradation; glycolysis; D-glyceraldehyde 3-phosphate and glycerone phosphate from D-glucose: step 4/4. This is Fructose-bisphosphate aldolase, cytoplasmic isozyme 2 from Pisum sativum (Garden pea).